A 297-amino-acid polypeptide reads, in one-letter code: Acetyl-coenzyme A carboxylase carboxyl transferase subunit beta (297 aa).

One can recognise a CoA carboxyltransferase N-terminal domain in the interval 27–296 (LWHKCPSCEA…PEEAREAAAV (270 aa)). Residues Cys31, Cys34, Cys50, and Cys53 each contribute to the Zn(2+) site. Residues 31–53 (CPSCEAVLYRPELEKTLDVCPKC) form a C4-type zinc finger.

This sequence belongs to the AccD/PCCB family. As to quaternary structure, acetyl-CoA carboxylase is a heterohexamer composed of biotin carboxyl carrier protein (AccB), biotin carboxylase (AccC) and two subunits each of ACCase subunit alpha (AccA) and ACCase subunit beta (AccD). It depends on Zn(2+) as a cofactor.

Its subcellular location is the cytoplasm. It carries out the reaction N(6)-carboxybiotinyl-L-lysyl-[protein] + acetyl-CoA = N(6)-biotinyl-L-lysyl-[protein] + malonyl-CoA. The protein operates within lipid metabolism; malonyl-CoA biosynthesis; malonyl-CoA from acetyl-CoA: step 1/1. Functionally, component of the acetyl coenzyme A carboxylase (ACC) complex. Biotin carboxylase (BC) catalyzes the carboxylation of biotin on its carrier protein (BCCP) and then the CO(2) group is transferred by the transcarboxylase to acetyl-CoA to form malonyl-CoA. The polypeptide is Acetyl-coenzyme A carboxylase carboxyl transferase subunit beta (Pseudomonas putida (strain ATCC 700007 / DSM 6899 / JCM 31910 / BCRC 17059 / LMG 24140 / F1)).